The chain runs to 2174 residues: MPVGDDKLVEALRASLKETENLRARNRELRAAAREPVAVVAMGCRFPGGVKSPEDLWHLVAEGTDAISPFPADRGWDTDSLFDSDPGRPGHTYVLEGGFLDDAAEFDADLFGISPREAVAMDPQQRLLLETAWETFERAGINPASLRGRPVGTFVGSVLTTNGGGAEPAEGSEGHQLTGSAASVLSGRLAYTFGLEGPAVTVDTACSAALASVHLAVQALRQRECAMALAGGSAVLTTPGIFVEFSRQRGLAPDGRCKPFAAAADGTGWGEGVGLVLLERLSDARRRGHPVLAVIRGSAVNQDGASNGLTAPNGPSQQRVIRQALAAARLSADLVDAVEAHGTGTTLGDPIEAQALLATYGQDRPADRPLWLGSVKSNLGHTQGAAGIAGLIKMVLAMRHGVLPRTLHIDRPTPHVDWSSGAVRLLTENREWPPTGRPRRAAVSSFGISGTNAHVILEQAPAEGEMTDGPEGADIPAVGLPLVLSARGDRALRQQAERLAAHLRARSGLRPPDVGHSLVTSRATLDQRAVVWSGDRDGLLAGLDALAQDRPAPGLTRGTATEGALAFLFSGQGSQRPGMGRQLAGEFPVFAEALDEAAGHLDPRLDRPLREILHAEEGTPRAALLEQTAFTQAALFAYEMAMFRLLTHWGITPALLLGHSVGELAAAHAAGVFSLEDACTLVAARGRLMQRMPGTGAMVAIQATEAEVLPLVAARAGEISLAAVNGPCSVVVSGAEGAVLEVAGYWKERGRRTSRLRVSHAFHSPQMTGMLQEFGEVAGKLEFHPPRIPVVSNLTGEIATDEQLCSPEYWVRHAQAPVRFHTGMRALVAAGVRTFMEVGPSGTLTAMAQDCLAEQPAATGAVVIPVARSGRPETGTTLAAVSRAFVQGTPVDWTRFFPQTGNRRVELPTYPFQRRGYPWSRASATAQVTAAGLAGLRHPLLGACLELADGQGTVFSGRLSRRTESWLAHHKVLGTALVPGTAIVEMALRAGTEARCGRLVELTQEAPLTLPDQGAVHLQVRVGAPGENGHRSLGVYSRPEEAPDWVCHARGQLAPEAAAPPAAPGEDWPPPGAEPVPLEGFYERLAAEGLDYGPAFRGLSRAWRLGEAVFAELALDRTARAGAGAYGVHPALLDSALHLALLDGALAGRSRLRIPFAWQDVSCHGAGAPALRARLTPAGTDSVSLALWDEHGAPVASVGSLVTRPITAGQLRATRTQDTLFHLNWAAAEPVPGAAPGCVVLGDDDLAAAVAAPGLPGPEALLAALDSGESIPGLVLLPCRAPDADTPDADDPLAAARSLTGRVLEVIHHWLTDARLTDSRLAVITRGALSAADGEPVTDPAAAALWGLVRSAQSEHPGRFLLADLDGHPGSTAALPAALSGNEPQLALREGRLLVPRLARGVPEGSLMPPPGAAEWRVAPAGGGTVDDLVLAPCPEAAAPLAPGQVRVAVRAAGLNFRDVVMALGMVADQRALGGEIAGVVTEVGPDVPGLAPGDRVFGLAAGCLGPVAVADHRLIAPMPPDWSFPQAAAVPVTFLTAFHGLVDLAGLRAGEKVLIHAAAGGVGIAAVQLARHLGAEVFATASPAKWDAVRALGVDEGHLASSRTGEFEARFAGSGGVDVVLNSLTGELLDASLRLLRPGGRFVEMGKTDIRDAARIAGEHQGVRYRAFDLMDAGPGRIAEMLAEILALFERGRLRPVPVRTWDVRQAPAAFRFLAQARNVGKLVLTMPPAWDPSGTILVTGGYGALGTEVARHLVRTGRARHLLLAGRRGPEAEGMAELTEELRKLGALSVRAVACDMAERASVAELLASVPAEHPLTAVVHTAGVVDDGLLESMTPRRLDTVFRPKADGAWHLHELTRDRELAAFVLFSSAAGTLGAAGQANYAAANAFLDALAAHRRDAGLPATALAWGMWAGTGGMAAALDRAGLDRVSRSGIAGLSTEDGLALFDAALAADRAVWLPIRFHTPALRTAAGQGSLPPLLRGLAGTPADPAAPAGAANALRERLAALAPGERRPAVRELVRGQVAAVLGHPTAETVDPQRPFKELGFDSLTAVELRNRLGAMTGLTLPSTLVFDHPTPDALTDAIEARLPAGPGAPAESFLARLDDWAAGLAAAPLDQDERERVAARLRALALRWEEGTRPQDTGPAVAGELDLATDEEVIDFISNELGIS.

Residues 34-459 (REPVAVVAMG…GTNAHVILEQ (426 aa)) enclose the Ketosynthase family 3 (KS3) domain. Residues Cys-206, His-341, and His-381 each act as for beta-ketoacyl synthase activity in the active site. The region spanning 567-888 (FLFSGQGSQR…AAVSRAFVQG (322 aa)) is the Malonyl-CoA:ACP transacylase (MAT) domain. Residues 938–1060 (HPLLGACLEL…GQLAPEAAAP (123 aa)) form an N-terminal hotdog fold region. The region spanning 938-1212 (HPLLGACLEL…TRPITAGQLR (275 aa)) is the PKS/mFAS DH domain. The active-site Proton acceptor; for dehydratase activity is the His-970. A disordered region spans residues 1056–1075 (EAAAPPAAPGEDWPPPGAEP). Residues 1061 to 1074 (PAAPGEDWPPPGAE) show a composition bias toward pro residues. Residues 1073–1212 (AEPVPLEGFY…TRPITAGQLR (140 aa)) are C-terminal hotdog fold. Asp-1134 acts as the Proton donor; for dehydratase activity in catalysis. The Enoyl reductase (ER) domain maps to 1424-1726 (GTVDDLVLAP…QARNVGKLVL (303 aa)). Positions 1736–1915 (GTILVTGGYG…ATALAWGMWA (180 aa)) constitute a Ketoreductase (KR) domain. Positions 2017 to 2092 (PAVRELVRGQ…ALTDAIEARL (76 aa)) constitute a Carrier domain. O-(pantetheine 4'-phosphoryl)serine is present on Ser-2052.

As to quaternary structure, the spectinabilin polyketide synthase complex is composed of 4 proteins, NorA, NorA', NorB and NorC. The complex comprises 6 modules with a total of 28 catalytic domains catalyzing 7 chain elongations. NorA comprises one module, NorA' two modules, NorB one module and NorC two modules. Pantetheine 4'-phosphate serves as cofactor.

It carries out the reaction 4-nitrobenzoyl-CoA + 6 (S)-methylmalonyl-CoA + malonyl-CoA + 6 NADPH + 12 H(+) = demethyldeoxyspectinabilin + 7 CO2 + 6 NADP(+) + 8 CoA + 5 H2O. It functions in the pathway antibiotic biosynthesis. It participates in polyketide biosynthesis. In terms of biological role, component of a type I modular polyketide synthase (PKS) that generates the backbone of the antibiotic spectinabilin (also known as neoaureothin), a nitroaryl-substituted polyketide metabolite. This PKS system accepts the unusual starter unit 4-nitrobenzoyl-CoA and extends it by 6 molecules of (S)-methylmalonyl-CoA and a single molecule of malonyl-CoA. This chain is Spectinabilin polyketide synthase system protein NorB, found in Streptomyces orinoci (Streptoverticillium orinoci).